An 81-amino-acid polypeptide reads, in one-letter code: ATP synthase subunit c (81 aa).

2 consecutive transmembrane segments (helical) span residues 6–26 (ASAS…GPGI) and 57–77 (LAFM…LLFA).

This sequence belongs to the ATPase C chain family. In terms of assembly, F-type ATPases have 2 components, F(1) - the catalytic core - and F(0) - the membrane proton channel. F(1) has five subunits: alpha(3), beta(3), gamma(1), delta(1), epsilon(1). F(0) has four main subunits: a(1), b(1), b'(1) and c(10-14). The alpha and beta chains form an alternating ring which encloses part of the gamma chain. F(1) is attached to F(0) by a central stalk formed by the gamma and epsilon chains, while a peripheral stalk is formed by the delta, b and b' chains.

The protein localises to the cellular thylakoid membrane. Its function is as follows. F(1)F(0) ATP synthase produces ATP from ADP in the presence of a proton or sodium gradient. F-type ATPases consist of two structural domains, F(1) containing the extramembraneous catalytic core and F(0) containing the membrane proton channel, linked together by a central stalk and a peripheral stalk. During catalysis, ATP synthesis in the catalytic domain of F(1) is coupled via a rotary mechanism of the central stalk subunits to proton translocation. Key component of the F(0) channel; it plays a direct role in translocation across the membrane. A homomeric c-ring of between 10-14 subunits forms the central stalk rotor element with the F(1) delta and epsilon subunits. This Gloeothece citriformis (strain PCC 7424) (Cyanothece sp. (strain PCC 7424)) protein is ATP synthase subunit c.